Here is a 220-residue protein sequence, read N- to C-terminus: Pyridoxine/pyridoxamine 5'-phosphate oxidase (220 aa).

Substrate-binding positions include 13–16 and Lys-77; that span reads RVEY. Residues 72–77, 87–88, Lys-94, and Gln-116 contribute to the FMN site; these read RTVLCK and FT. Substrate contacts are provided by Tyr-134, Arg-138, and Ser-142. Residues 151–152 and Trp-197 contribute to the FMN site; that span reads QS. 203-205 is a binding site for substrate; it reads RLH. Arg-207 is a binding site for FMN.

It belongs to the pyridoxamine 5'-phosphate oxidase family. In terms of assembly, homodimer. It depends on FMN as a cofactor.

It catalyses the reaction pyridoxamine 5'-phosphate + O2 + H2O = pyridoxal 5'-phosphate + H2O2 + NH4(+). It carries out the reaction pyridoxine 5'-phosphate + O2 = pyridoxal 5'-phosphate + H2O2. Its pathway is cofactor metabolism; pyridoxal 5'-phosphate salvage; pyridoxal 5'-phosphate from pyridoxamine 5'-phosphate: step 1/1. It functions in the pathway cofactor metabolism; pyridoxal 5'-phosphate salvage; pyridoxal 5'-phosphate from pyridoxine 5'-phosphate: step 1/1. Functionally, catalyzes the oxidation of either pyridoxine 5'-phosphate (PNP) or pyridoxamine 5'-phosphate (PMP) into pyridoxal 5'-phosphate (PLP). The protein is Pyridoxine/pyridoxamine 5'-phosphate oxidase of Mycolicibacterium paratuberculosis (strain ATCC BAA-968 / K-10) (Mycobacterium paratuberculosis).